A 597-amino-acid polypeptide reads, in one-letter code: Nuclear receptor subfamily 4 group A member 1 (597 aa).

Residues 1–22 (MPCIQAQYGTPATSPGPRDHLT) form a disordered region. The required for nuclear import stretch occupies residues 170-465 (RVWTEQLPKA…PGEGKLIFCS (296 aa)). The nuclear receptor DNA-binding region spans 263–338 (EGRCAVCGDN…VGMVKEVVRT (76 aa)). 2 NR C4-type zinc fingers span residues 266–286 (CAVCGDNASCQHYGVRTCEGC) and 302–326 (CLANKDCPVDKRRRNRCQFCRFQKC). Residues 267–353 (AVCGDNASCQ…RRGRLPSKPK (87 aa)) are required for binding NBRE-containing DNA. The segment at 298 to 360 (AKYICLANKD…KPKQPPDASP (63 aa)) is required for the interaction with RXRA. At S340 the chain carries Phosphoserine; by PKA. Residues 341–360 (LKGRRGRLPSKPKQPPDASP) form a disordered region. The residue at position 350 (S350) is a Phosphoserine; by PKA, RPS6KA1 and RPS6KA3. The NR LBD domain occupies 359 to 594 (SPTNLLTSLI…PIVDKIFMDT (236 aa)). Residues 520–543 (PRRVEELQNRIASCLKEHMAAVAG) are binds lipopolysaccharide. An AF-2 region spans residues 583–594 (PPPIVDKIFMDT).

This sequence belongs to the nuclear hormone receptor family. NR4 subfamily. Binds the NGFI-B response element (NBRE) as a monomer. Binds the Nur response element (NurRE), consisting of two inverse NBRE-related octanucleotide repeats separated by 6 base-pairs, as a dimer. Interacts (via N-terminus) with NLRP3 (via LRR repeat domain); the interaction is direct, requires binding of NR4A1/Nur77 to NBRE-containing dsDNA and lipopolysaccharide, and leads to non-canonical NLRP3 inflammasome activation. Interacts with GADD45GIP1. Interacts with STK11. Interacts with IFI27. Heterodimer (via DNA-binding domain) with RXRA (via C-terminus); DNA-binding of the heterodimer is enhanced by 9-cis retinoic acid. Competes for the RXRA interaction with EP300 and thereby attenuates EP300 mediated acetylation of RXRA. Interacts with NCOA1. Interacts with NCOA2. Interacts with NCOA3. Requires Zn(2+) as cofactor. Phosphorylated at Ser-350 by RPS6KA1 and RPS6KA3 in response to mitogenic or stress stimuli. Phosphorylation of Ser-350 results in decrease in NBRE binding while phosphorylation of Ser-340 has little effect on it. In terms of processing, acetylated by p300/CBP, acetylation increases stability. Deacetylated by HDAC1. As to expression, expressed in lung, brain and superior cervical ganglia. High levels are seen in the adrenal tissue.

It is found in the nucleus. Its subcellular location is the cytoplasm. The protein localises to the cytosol. It localises to the mitochondrion. In terms of biological role, orphan nuclear receptor. Binds the NGFI-B response element (NBRE) 5'-AAAGGTCA-3'. Binds 9-cis-retinoic acid outside of its ligand-binding (NR LBD) domain. Participates in energy homeostasis by sequestrating the kinase STK11 in the nucleus, thereby attenuating cytoplasmic AMPK activation. Regulates the inflammatory response in macrophages by regulating metabolic adaptations during inflammation, including repressing the transcription of genes involved in the citric acid cycle (TCA). Inhibits NF-kappa-B signaling by binding to low-affinity NF-kappa-B binding sites, such as at the IL2 promoter. May act concomitantly with NR4A2 in regulating the expression of delayed-early genes during liver regeneration. Plays a role in the vascular response to injury. Its function is as follows. In the cytosol, upon its detection of both bacterial lipopolysaccharide (LPS) and NBRE-containing mitochondrial DNA released by GSDMD pores during pyroptosis, it promotes non-canonical NLRP3 inflammasome activation by stimulating association of NLRP3 and NEK7. The chain is Nuclear receptor subfamily 4 group A member 1 (Nr4a1) from Rattus norvegicus (Rat).